Consider the following 97-residue polypeptide: Large ribosomal subunit protein bL28 (97 aa).

The tract at residues 1-20 is disordered; that stretch reads MSRRCELTAKGPQVGHKVSH.

Belongs to the bacterial ribosomal protein bL28 family.

This chain is Large ribosomal subunit protein bL28, found in Afipia carboxidovorans (strain ATCC 49405 / DSM 1227 / KCTC 32145 / OM5) (Oligotropha carboxidovorans).